The chain runs to 389 residues: Na(+)/H(+) antiporter NhaA 1 (389 aa).

The next 12 membrane-spanning stretches (helical) occupy residues 12–32, 62–82, 97–117, 128–148, 157–177, 184–204, 220–240, 260–280, 282–302, 305–325, 331–351, and 365–385; these read VLNE…ALLV, FLLW…GLEL, IVLP…LFVL, GWAI…MMCG, IFLL…IAIF, IVAF…NILG, ISVL…AFFI, FWLA…VNLS, IDIG…LFVG, AGVF…LPQG, LYGV…IDGL, and LAIL…LKFF.

Belongs to the NhaA Na(+)/H(+) (TC 2.A.33) antiporter family.

It is found in the cell inner membrane. It carries out the reaction Na(+)(in) + 2 H(+)(out) = Na(+)(out) + 2 H(+)(in). Functionally, na(+)/H(+) antiporter that extrudes sodium in exchange for external protons. This is Na(+)/H(+) antiporter NhaA 1 from Campylobacter jejuni subsp. jejuni serotype O:23/36 (strain 81-176).